The primary structure comprises 283 residues: uncharacterized protein (283 aa).

This is an uncharacterized protein from Halobacterium salinarum (strain ATCC 700922 / JCM 11081 / NRC-1) (Halobacterium halobium).